The chain runs to 255 residues: tRNA (guanine-N(1)-)-methyltransferase (255 aa).

Residues Gly-113 and 133–138 (IGDYVL) contribute to the S-adenosyl-L-methionine site.

Belongs to the RNA methyltransferase TrmD family. As to quaternary structure, homodimer.

It localises to the cytoplasm. The enzyme catalyses guanosine(37) in tRNA + S-adenosyl-L-methionine = N(1)-methylguanosine(37) in tRNA + S-adenosyl-L-homocysteine + H(+). Its function is as follows. Specifically methylates guanosine-37 in various tRNAs. The protein is tRNA (guanine-N(1)-)-methyltransferase of Serratia proteamaculans (strain 568).